The following is an 862-amino-acid chain: Semaphorin-4D (862 aa).

The N-terminal stretch at 1 to 21 (MRMCTPIRGLLMALAVMFGTA) is a signal peptide. Residues 22 to 500 (MAFAPIPRIT…SNSGVVQAPL (479 aa)) form the Sema domain. The Extracellular segment spans residues 22–734 (MAFAPIPRIT…TMYLKSSDNR (713 aa)). N-linked (GlcNAc...) asparagine glycans are attached at residues Asn49 and Asn77. 2 disulfide bridges follow: Cys97-Cys108 and Cys126-Cys135. Asn139 and Asn191 each carry an N-linked (GlcNAc...) asparagine glycan. Disulfide bonds link Cys257/Cys370 and Cys281/Cys326. N-linked (GlcNAc...) asparagine glycans are attached at residues Asn329, Asn379, and Asn419. A PSI domain is found at 502-551 (FCGKHGTCEDCVLARDPYCAWSPPTATCVALHQTESPSRGLIQEMSGDAS). Cystine bridges form between Cys503–Cys520, Cys509–Cys553, Cys512–Cys529, and Cys576–Cys624. Positions 554 to 636 (PDKSKGSYRQ…EERVKNKTVF (83 aa)) constitute an Ig-like C2-type domain. Asn613 and Asn632 each carry an N-linked (GlcNAc...) asparagine glycan. Residues 735-755 (LLMSLFLFFFVLFLCLFFYNC) traverse the membrane as a helical segment. The Cytoplasmic segment spans residues 756–862 (YKGYLPRQCL…KFADSDADGD (107 aa)). A disordered region spans residues 794-837 (VEPGSFSQQNGEHPKPALDTGYETEQDTITSKVPTDREDSQRID). Positions 827–837 (PTDREDSQRID) are enriched in basic and acidic residues. Position 833 is a phosphoserine (Ser833).

It belongs to the semaphorin family. As to quaternary structure, homodimer. Interacts with PLXNB2. Interacts with PLXNB1. As to expression, strongly expressed in skeletal muscle, peripheral blood lymphocytes, spleen, and thymus and also expressed at lower levels in testes, brain, kidney, small intestine, prostate, heart, placenta, lung and pancreas, but not in colon and liver.

Its subcellular location is the cell membrane. Its function is as follows. Cell surface receptor for PLXNB1 and PLXNB2 that plays an important role in cell-cell signaling. Regulates GABAergic synapse development. Promotes the development of inhibitory synapses in a PLXNB1-dependent manner. Modulates the complexity and arborization of developing neurites in hippocampal neurons by activating PLXNB1 and interaction with PLXNB1 mediates activation of RHOA. Promotes the migration of cerebellar granule cells. Plays a role in the immune system; induces B-cells to aggregate and improves their viability (in vitro). Induces endothelial cell migration through the activation of PTK2B/PYK2, SRC, and the phosphatidylinositol 3-kinase-AKT pathway. This is Semaphorin-4D (SEMA4D) from Homo sapiens (Human).